The sequence spans 388 residues: Succinate--CoA ligase [ADP-forming] subunit beta (388 aa).

In terms of domain architecture, ATP-grasp spans 9-244 (KQLFAEYGLP…PSQDDAREAH (236 aa)). Residues K46, 53 to 55 (GRG), E99, T102, and E107 each bind ATP. Mg(2+)-binding residues include N199 and D213. Substrate-binding positions include N264 and 321–323 (GIV).

This sequence belongs to the succinate/malate CoA ligase beta subunit family. As to quaternary structure, heterotetramer of two alpha and two beta subunits. Mg(2+) is required as a cofactor.

It catalyses the reaction succinate + ATP + CoA = succinyl-CoA + ADP + phosphate. The enzyme catalyses GTP + succinate + CoA = succinyl-CoA + GDP + phosphate. The protein operates within carbohydrate metabolism; tricarboxylic acid cycle; succinate from succinyl-CoA (ligase route): step 1/1. Functionally, succinyl-CoA synthetase functions in the citric acid cycle (TCA), coupling the hydrolysis of succinyl-CoA to the synthesis of either ATP or GTP and thus represents the only step of substrate-level phosphorylation in the TCA. The beta subunit provides nucleotide specificity of the enzyme and binds the substrate succinate, while the binding sites for coenzyme A and phosphate are found in the alpha subunit. The chain is Succinate--CoA ligase [ADP-forming] subunit beta from Pseudomonas paraeruginosa (strain DSM 24068 / PA7) (Pseudomonas aeruginosa (strain PA7)).